The chain runs to 186 residues: ATP synthase subunit delta (186 aa).

It belongs to the ATPase delta chain family. As to quaternary structure, F-type ATPases have 2 components, F(1) - the catalytic core - and F(0) - the membrane proton channel. F(1) has five subunits: alpha(3), beta(3), gamma(1), delta(1), epsilon(1). F(0) has three main subunits: a(1), b(2) and c(10-14). The alpha and beta chains form an alternating ring which encloses part of the gamma chain. F(1) is attached to F(0) by a central stalk formed by the gamma and epsilon chains, while a peripheral stalk is formed by the delta and b chains.

Its subcellular location is the cell inner membrane. F(1)F(0) ATP synthase produces ATP from ADP in the presence of a proton or sodium gradient. F-type ATPases consist of two structural domains, F(1) containing the extramembraneous catalytic core and F(0) containing the membrane proton channel, linked together by a central stalk and a peripheral stalk. During catalysis, ATP synthesis in the catalytic domain of F(1) is coupled via a rotary mechanism of the central stalk subunits to proton translocation. Its function is as follows. This protein is part of the stalk that links CF(0) to CF(1). It either transmits conformational changes from CF(0) to CF(1) or is implicated in proton conduction. The chain is ATP synthase subunit delta from Leptospira interrogans serogroup Icterohaemorrhagiae serovar copenhageni (strain Fiocruz L1-130).